We begin with the raw amino-acid sequence, 232 residues long: Thiamine import ATP-binding protein ThiQ (232 aa).

The ABC transporter domain maps to 2-230; that stretch reads LKLTDITWLY…KASASALLGI (229 aa). 32–39 is a binding site for ATP; that stretch reads GPSGAGKS.

The protein belongs to the ABC transporter superfamily. Thiamine importer (TC 3.A.1.19.1) family. The complex is composed of two ATP-binding proteins (ThiQ), two transmembrane proteins (ThiP) and a solute-binding protein (ThiB).

Its subcellular location is the cell inner membrane. The catalysed reaction is thiamine(out) + ATP + H2O = thiamine(in) + ADP + phosphate + H(+). Functionally, part of the ABC transporter complex ThiBPQ involved in thiamine import. Responsible for energy coupling to the transport system. The protein is Thiamine import ATP-binding protein ThiQ of Escherichia coli O6:K15:H31 (strain 536 / UPEC).